The chain runs to 165 residues: Interferon gamma (165 aa).

The first 23 residues, 1-23 (MKYTSYILAFQLCIVLGSLGCYC), serve as a signal peptide directing secretion. Residue glutamine 24 is modified to Pyrrolidone carboxylic acid. N-linked (GlcNAc...) asparagine glycosylation is found at asparagine 48 and asparagine 120.

This sequence belongs to the type II (or gamma) interferon family. Homodimer. Interacts with IFNGR1 (via extracellular domain); this interaction promotes IFNGR1 dimerization. As to expression, released primarily from activated T lymphocytes.

It localises to the secreted. In terms of biological role, type II interferon produced by immune cells such as T-cells and NK cells that plays crucial roles in antimicrobial, antiviral, and antitumor responses by activating effector immune cells and enhancing antigen presentation. Primarily signals through the JAK-STAT pathway after interaction with its receptor IFNGR1 to affect gene regulation. Upon IFNG binding, IFNGR1 intracellular domain opens out to allow association of downstream signaling components JAK2, JAK1 and STAT1, leading to STAT1 activation, nuclear translocation and transcription of IFNG-regulated genes. Many of the induced genes are transcription factors such as IRF1 that are able to further drive regulation of a next wave of transcription. Plays a role in class I antigen presentation pathway by inducing a replacement of catalytic proteasome subunits with immunoproteasome subunits. In turn, increases the quantity, quality, and repertoire of peptides for class I MHC loading. Increases the efficiency of peptide generation also by inducing the expression of activator PA28 that associates with the proteasome and alters its proteolytic cleavage preference. Up-regulates as well MHC II complexes on the cell surface by promoting expression of several key molecules such as cathepsins B/CTSB, H/CTSH, and L/CTSL. Participates in the regulation of hematopoietic stem cells during development and under homeostatic conditions by affecting their development, quiescence, and differentiation. In Macaca fascicularis (Crab-eating macaque), this protein is Interferon gamma (IFNG).